Reading from the N-terminus, the 842-residue chain is Leucine--tRNA ligase (842 aa).

The short motif at P44 to H55 is the 'HIGH' region element. The 'KMSKS' region signature appears at K619–S623. K622 serves as a coordination point for ATP.

Belongs to the class-I aminoacyl-tRNA synthetase family.

The protein resides in the cytoplasm. It catalyses the reaction tRNA(Leu) + L-leucine + ATP = L-leucyl-tRNA(Leu) + AMP + diphosphate. The sequence is that of Leucine--tRNA ligase from Borrelia recurrentis (strain A1).